Reading from the N-terminus, the 466-residue chain is Citrate synthase, mitochondrial (466 aa).

The transit peptide at 1–27 directs the protein to the mitochondrion; that stretch reads MALLTAAARLLGTKNASCLVLAARHAS. Positions 2 to 21 match the SIFI-degron motif; the sequence is ALLTAAARLLGTKNASCLVL. Lys-57 is modified (N6-succinyllysine). Residue Lys-76 is modified to N6-acetyllysine; alternate. Lys-76 is subject to N6-succinyllysine; alternate. N6-succinyllysine is present on residues Lys-103 and Lys-193. His-301 is a catalytic residue. Lys-321 and Lys-327 each carry N6-acetyllysine; alternate. Lys-321 and Lys-327 each carry N6-succinyllysine; alternate. The active site involves His-347. Arg-356 is an oxaloacetate binding site. Lys-375 bears the N6-acetyllysine; alternate mark. Position 375 is an N6-succinyllysine; alternate (Lys-375). Residue Lys-382 is modified to N6-acetyllysine. At Lys-393 the chain carries N6-acetyllysine; alternate. At Lys-393 the chain carries N6-succinyllysine; alternate. Lys-395 carries the N6,N6,N6-trimethyllysine modification. Asp-402 is a catalytic residue. Residues Arg-428 and Arg-448 each coordinate oxaloacetate. An N6-succinyllysine modification is found at Lys-450. N6-acetyllysine; alternate is present on Lys-459. Lys-459 is modified (N6-succinyllysine; alternate).

It belongs to the citrate synthase family. Homodimer. In terms of processing, methylated. Trimethylation at Lys-395 by CSKMT decreases citrate synthase activity. In response to mitochondrial stress, the precursor protein is ubiquitinated by the SIFI complex in the cytoplasm before mitochondrial import, leading to its degradation. Within the SIFI complex, UBR4 initiates ubiquitin chain that are further elongated or branched by KCMF1.

Its subcellular location is the mitochondrion matrix. The catalysed reaction is oxaloacetate + acetyl-CoA + H2O = citrate + CoA + H(+). The protein operates within carbohydrate metabolism; tricarboxylic acid cycle; isocitrate from oxaloacetate: step 1/2. In terms of biological role, key enzyme of the Krebs tricarboxylic acid cycle which catalyzes the synthesis of citrate from acetyl coenzyme A and oxaloacetate. The chain is Citrate synthase, mitochondrial (CS) from Homo sapiens (Human).